A 37-amino-acid chain; its full sequence is Large ribosomal subunit protein bL36c (37 aa).

Belongs to the bacterial ribosomal protein bL36 family.

Its subcellular location is the plastid. It is found in the chloroplast. In Cyanidioschyzon merolae (strain NIES-3377 / 10D) (Unicellular red alga), this protein is Large ribosomal subunit protein bL36c.